Reading from the N-terminus, the 528-residue chain is 4-nitrophenol 4-monooxygenase/4-nitrocatechol 2-monooxygenase, oxygenase component (528 aa).

Substrate is bound at residue 100-104 (RPPAG). FAD-binding positions include 153 to 155 (PMF), 159 to 162 (QFDR), and Thr-194. Substrate is bound at residue 205–206 (GN). 461–464 (TMQR) lines the FAD pocket.

Belongs to the FADH(2)-utilizing monooxygenase family. The 4-NP/4-NCA monooxygenase is composed of an oxygenase component NpcA and a reductase component NpcB. Requires FAD as cofactor.

It catalyses the reaction 4-nitrophenol + NADH + O2 + H(+) = 4-nitrocatechol + NAD(+) + H2O. The enzyme catalyses 4-nitrocatechol + NADPH + O2 = 2-hydroxy-1,4-benzoquinone + nitrite + NADP(+) + H2O. It carries out the reaction 4-nitrocatechol + NADH + O2 = 2-hydroxy-1,4-benzoquinone + nitrite + NAD(+) + H2O. Its pathway is aromatic compound metabolism. It participates in xenobiotic degradation. With respect to regulation, inhibited by methimazole. In terms of biological role, involved in the degradation of para-nitrophenol (4-NP). Catalyzes both the initial hydroxylation of 4-NP to produce 4-nitrocatechol (4-NCA) and the subsequent oxidative release of the nitro group from 4-NCA to produce 2-hydroxy-1,4-benzoquinone. It can also use 4-nitroresorcinol as substrate with a rate of nitrite release similar to that observed with the two physiological substrates, 4-PN and 4-NCA. The protein is 4-nitrophenol 4-monooxygenase/4-nitrocatechol 2-monooxygenase, oxygenase component (npcA) of Rhodococcus opacus (Nocardia opaca).